The following is a 307-amino-acid chain: Recombination-associated protein RdgC (307 aa).

Belongs to the RdgC family.

It is found in the cytoplasm. It localises to the nucleoid. Functionally, may be involved in recombination. The sequence is that of Recombination-associated protein RdgC from Colwellia psychrerythraea (strain 34H / ATCC BAA-681) (Vibrio psychroerythus).